The following is a 196-amino-acid chain: Mitochondrial inner membrane protein SHH3 (196 aa).

Residues 1-53 constitute a mitochondrion transit peptide; sequence MKATIQRVTSVFGVPRASVFVPRISTPFILHNYISNGRMDLFSKEFHNGRVSK. At 54–97 the chain is on the mitochondrial matrix side; it reads SDLWSSNKEEELLVSQRKKRPISPHLTVYEPEMSWYLSSLHRIS. S91 and R95 together coordinate a ubiquinone. The helical transmembrane segment at 98 to 118 threads the bilayer; the sequence is GVLLALGFYAFTITLGVTTIM. Residues 119–137 are Mitochondrial intermembrane-facing; the sequence is GMDTTFQDLNKWYHEKMPK. Residues 138–160 traverse the membrane as a helical segment; sequence WSQWVAKGSAAYLFAFHFGNGIR. A heme-binding site is contributed by H154. At 161 to 174 the chain is on the mitochondrial matrix side; that stretch reads HLIWDMGYELTNRG. Residues 175-195 traverse the membrane as a helical segment; the sequence is VIKTGSIVLAGTLVLGTYLLA. Residue Q196 is a topological domain, mitochondrial intermembrane.

Belongs to the cytochrome b560 family.

The protein localises to the mitochondrion inner membrane. In terms of biological role, homolog of SDH3, but seems not to be a stoichiometric subunit of either the succinate dehydrogenase (SDH) complex or the mitochondrial inner membrane translocase TIM22 complex. The protein is Mitochondrial inner membrane protein SHH3 of Saccharomyces cerevisiae (strain ATCC 204508 / S288c) (Baker's yeast).